The sequence spans 113 residues: 14 kDa zinc-binding protein (113 aa).

Residues 3 to 113 (IFGKIISKEI…GGRQMNWPPG (111 aa)) form the HIT domain. The Histidine triad motif motif lies at 97–101 (HIHVH).

As to quaternary structure, homodimer.

The polypeptide is 14 kDa zinc-binding protein (Brassica juncea (Indian mustard)).